We begin with the raw amino-acid sequence, 336 residues long: Oxaloacetate decarboxylase (336 aa).

The 249-residue stretch at proline 10–phenylalanine 258 folds into the Pyruvate carboxyltransferase domain. Mn(2+) contacts are provided by aspartate 19, histidine 197, and histidine 199.

The protein belongs to the 4-hydroxy-2-oxovalerate aldolase family. Homodimer. It depends on a divalent metal cation as a cofactor.

It carries out the reaction oxaloacetate + H(+) = pyruvate + CO2. With respect to regulation, activity is abolished upon incubation with Chelex and EDTA. In terms of biological role, exhibits oxaloacetate decarboxylase activity. Lacks any detectable aldolase activity with 4-hydroxy-2-oxopentanoate (HOPA), 4-hydroxy-2-oxohexanoate (HOHA) or other 4-hydroxy-2-oxoacids. This Mycobacterium tuberculosis (strain ATCC 25618 / H37Rv) protein is Oxaloacetate decarboxylase.